The primary structure comprises 30 residues: AESEAGDASPLVTEVLIGSPPGYVGYTEGG.

The protein belongs to the ClpA/ClpB family.

The protein localises to the plastid. The protein resides in the chloroplast. Functionally, may interact with a ClpP-like protease involved in degradation of denatured proteins in the chloroplast. The chain is ATP-dependent Clp protease ATP-binding subunit ClpA homolog from Pinus pinaster (Maritime pine).